Consider the following 200-residue polypeptide: ADP-ribosylation factor-like protein 4A (200 aa).

Gly2 carries N-myristoyl glycine lipidation. GTP is bound by residues 27 to 34, 75 to 79, and 134 to 137; these read GLDCAGKT, DVGGQ, and NKQD.

It belongs to the small GTPase superfamily. Arf family. In terms of assembly, interacts with CYTH2. Interacts with KPNA2; the interaction is direct. Does not interact with ARL4A. Myristoylated. As to expression, expressed strongly in testis and liver. Expressed slightly in heart, spleen, lung and kidney.

The protein resides in the cell membrane. It localises to the cytoplasm. It is found in the nucleus. Its subcellular location is the nucleolus. In terms of biological role, small GTP-binding protein which cycles between an inactive GDP-bound and an active GTP-bound form, and the rate of cycling is regulated by guanine nucleotide exchange factors (GEF) and GTPase-activating proteins (GAP). GTP-binding protein that does not act as an allosteric activator of the cholera toxin catalytic subunit. Recruits CYTH1, CYTH2, CYTH3 and CYTH4 to the plasma membrane in GDP-bound form. The protein is ADP-ribosylation factor-like protein 4A (Arl4a) of Mus musculus (Mouse).